The sequence spans 126 residues: Anti-adapter protein IraD (126 aa).

Belongs to the GpW/Gp25 family. IraD subfamily. Interacts with RssB.

Its subcellular location is the cytoplasm. Its function is as follows. Inhibits RpoS proteolysis by regulating RssB activity, thereby increasing the stability of the sigma stress factor RpoS during oxidative stress. Its effect on RpoS stability is due to its interaction with RssB, which probably blocks the interaction of RssB with RpoS, and the consequent delivery of the RssB-RpoS complex to the ClpXP protein degradation pathway. This chain is Anti-adapter protein IraD, found in Salmonella choleraesuis (strain SC-B67).